A 603-amino-acid polypeptide reads, in one-letter code: Extracellular basic protease (603 aa).

The N-terminal stretch at 1–21 is a signal peptide; it reads MNLSNISAVKVLTLVVSAAIA. The propeptide occupies 22–132; the sequence is GQVCAAESIV…VEVDRLAYPK (111 aa). The 326-residue stretch at 143–468 folds into the Peptidase S8 domain; sequence QWHYFGNYGV…SGIVDANAAV (326 aa). Asp-173 serves as the catalytic Charge relay system. The tract at residues 197–221 is disordered; sequence PNARDGDQRDNNPADEGDWFDNWDC. 2 disulfides stabilise this stretch: Cys-221-Cys-273 and Cys-315-Cys-352. The active-site Charge relay system is the His-237. Ser-409 functions as the Charge relay system in the catalytic mechanism. Residues 477–603 constitute a propeptide that is removed on maturation; sequence RAQPRPPVNQ…GSIDSWSLTF (127 aa). The P/Homo B domain occupies 478–603; it reads AQPRPPVNQP…GSIDSWSLTF (126 aa).

Belongs to the peptidase S8 family.

The protein resides in the secreted. This is Extracellular basic protease (bprV) from Dichelobacter nodosus (Bacteroides nodosus).